Consider the following 468-residue polypeptide: Peroxisome proliferator-activated receptor alpha (468 aa).

The nuclear receptor DNA-binding region spans 99-173 (NIECRICGDK…VGMSHNAIRF (75 aa)). 2 NR C4-type zinc fingers span residues 102-122 (CRIC…CEGC) and 139-161 (CDRS…FHKC). Residues 239 to 466 (FVIHDMETLC…HPLLQEIYRD (228 aa)) enclose the NR LBD domain. The segment at 304-433 (DQVTLLKYGV…PKLLQKMVDL (130 aa)) is required for heterodimerization with RXRA.

This sequence belongs to the nuclear hormone receptor family. NR1 subfamily. Heterodimer; with RXRA. This heterodimerization is required for DNA binding and transactivation activity. Interacts with NCOA3 coactivator. Interacts with CITED2; the interaction stimulates its transcriptional activity. Also interacts with PPARBP in vitro. Interacts with AKAP13, LPIN1, PRDM16 and coactivator NCOA6. Interacts with ASXL1 and ASXL2. Interacts with PER2. Interacts with SIRT1; the interaction seems to be modulated by NAD(+) levels. Interacts with CRY1 and CRY2. In hepatocytes, interacts with PAQR3 and HUWE1; the interactions promote PPARA poylubiquitination and HUWE1-mediated degradation. Phosphorylated. In terms of processing, ubiquitinated by E3 ubiquitin-protein ligase HUWE1; leading to proteasomal degradation. As to expression, expressed predominantly in liver and kidney.

It localises to the nucleus. In terms of biological role, ligand-activated transcription factor. Key regulator of lipid metabolism. Activated by the endogenous ligand 1-palmitoyl-2-oleoyl-sn-glycerol-3-phosphocholine (16:0/18:1-GPC). Activated by oleylethanolamide, a naturally occurring lipid that regulates satiety. Receptor for peroxisome proliferators such as hypolipidemic drugs and fatty acids. Regulates the peroxisomal beta-oxidation pathway of fatty acids. Functions as a transcription activator for the ACOX1 and P450 genes. Transactivation activity requires heterodimerization with RXRA and is antagonized by NR2C2. May be required for the propagation of clock information to metabolic pathways regulated by PER2. This is Peroxisome proliferator-activated receptor alpha (Ppara) from Rattus norvegicus (Rat).